The following is a 473-amino-acid chain: PTS system trehalose-specific EIIBC component (473 aa).

A PTS EIIB type-1 domain is found at 1-89 (MMSKINQTDI…IASTGQAQVD (89 aa)). Residues 1 to 110 (MMSKINQTDI…MKWHEQLISH (110 aa)) are Cytoplasmic-facing. The Phosphocysteine intermediate; for EIIB activity role is filled by Cys29. Cys29 is modified (phosphocysteine; by EIIA). Residues 109–473 (SHFAVIFFPL…KYRLGTLDIV (365 aa)) enclose the PTS EIIC type-1 domain. Residues 111–131 (FAVIFFPLLPALISGGLILGF) form a helical membrane-spanning segment. The Periplasmic segment spans residues 132–158 (RNVIGDLPMSNGQTLAQMYPSLQTIYD). A helical membrane pass occupies residues 159 to 179 (FLWLIGEAIFFYLPVGICWSA). Residues 180-187 (VKKMGGTP) lie on the Cytoplasmic side of the membrane. The helical transmembrane segment at 188–208 (ILGIVLGVTLVSPQLMNAYLL) threads the bilayer. The Periplasmic segment spans residues 209 to 225 (GQQLPEVWDFGMFSIAK). Residues 226–246 (VGYQAQVIPALLAGLALGVIE) form a helical membrane-spanning segment. Residues 247–258 (TRLKRIVPDYLY) lie on the Cytoplasmic side of the membrane. Residues 259-279 (LVVVPVCSLILAVFLAHALIG) form a helical membrane-spanning segment. At 280 to 300 (PFGRMIGDGVAFAVRHLMTGS) the chain is on the periplasmic side. A helical transmembrane segment spans residues 301–321 (FAPIGAALFGFLYAPLVITGV). The Cytoplasmic segment spans residues 322–340 (HQTTLAIDLQMIQSMGGTP). A helical transmembrane segment spans residues 341-361 (VWPLIALSNIAQGSAVIGIII). Topologically, residues 362 to 370 (SSRKHNERE) are periplasmic. The helical transmembrane segment at 371-391 (ISVPAAISAWLGVTEPAMYGI) threads the bilayer. Residues 392 to 398 (NLKYRFP) are Cytoplasmic-facing. A helical transmembrane segment spans residues 399–419 (MLCAMIGSGLAGLLCGLNGVM). Residues 420–440 (ANGIGVGGLPGILSIQPSYWQ) are Periplasmic-facing. Residues 441–461 (VFALAMAIAIIIPIVLTSFIY) traverse the membrane as a helical segment. At 462–473 (QRKYRLGTLDIV) the chain is on the cytoplasmic side.

The protein resides in the cell inner membrane. It carries out the reaction alpha,alpha-trehalose(out) + N(pros)-phospho-L-histidyl-[protein] = alpha,alpha-trehalose 6-phosphate(in) + L-histidyl-[protein]. Functionally, the phosphoenolpyruvate-dependent sugar phosphotransferase system (sugar PTS), a major carbohydrate active transport system, catalyzes the phosphorylation of incoming sugar substrates concomitantly with their translocation across the cell membrane. This system is involved in trehalose transport at low osmolarity. In Escherichia coli (strain K12), this protein is PTS system trehalose-specific EIIBC component (treB).